The following is a 107-amino-acid chain: Small integral membrane protein 19 (107 aa).

The chain crosses the membrane as a helical span at residues 25 to 43 (ATNVYLIVILVSFGLFMYA).

It belongs to the SMIM19 family.

It is found in the membrane. In Homo sapiens (Human), this protein is Small integral membrane protein 19 (SMIM19).